We begin with the raw amino-acid sequence, 392 residues long: uncharacterized protein (392 aa).

This is an uncharacterized protein from Encephalitozoon cuniculi (strain GB-M1) (Microsporidian parasite).